The chain runs to 92 residues: Small ribosomal subunit protein uS19 (92 aa).

This sequence belongs to the universal ribosomal protein uS19 family.

Functionally, protein S19 forms a complex with S13 that binds strongly to the 16S ribosomal RNA. This chain is Small ribosomal subunit protein uS19, found in Allorhizobium ampelinum (strain ATCC BAA-846 / DSM 112012 / S4) (Agrobacterium vitis (strain S4)).